Consider the following 370-residue polypeptide: Protein PAM71, chloroplastic (370 aa).

The tract at residues 1–38 (MLSLNLSESLRIPFQNPRPPKSDFSSTSSSPSSSSRRC) is disordered. Residues 1–73 (MLSLNLSESL…RNESQQLGFR (73 aa)) constitute a chloroplast transit peptide. A compositionally biased stretch (low complexity) spans 22-38 (SDFSSTSSSPSSSSRRC). The Stromal segment spans residues 74 to 113 (CFQRNDAACYLEKAESEEHDRNLDVLVESSIAHSRREIQR). Residues 114–134 (VLMFLAVSGSVALLGTDPAFA) form a helical membrane-spanning segment. Residues 135 to 161 (ASSIPNVTQSLVTSFGDLGDISSGFAS) lie on the Lumenal, thylakoid side of the membrane. Residues 162-182 (AFLLIFFSELGDKTFFIAALL) traverse the membrane as a helical segment. Residues 183-188 (AARNSA) are Stromal-facing. Residues 189 to 209 (ATVFVGTFGALGIMTIISVVL) traverse the membrane as a helical segment. At 210–228 (GRTFHYVDEVLPFRFGGTD) the chain is on the lumenal, thylakoid side. Residues 229–249 (LPIDDIAAVCLLVYFGVSTLL) traverse the membrane as a helical segment. The Stromal segment spans residues 250–275 (DAVSDEGKADEEQKEAELAVSELSGN). Residues 276-296 (GAGIVAAANTIISTFALVFVA) form a helical membrane-spanning segment. The Lumenal, thylakoid portion of the chain corresponds to 297-315 (EWGDKSFFSTIALAAASSP). The helical transmembrane segment at 316-336 (LGVIAGALAGHGAATLLAVLG) threads the bilayer. Residues 337 to 348 (GSLLGNFLSEKA) lie on the Stromal side of the membrane. A helical transmembrane segment spans residues 349–369 (IAYVGGVLFLVFAAVTVAEIV). Residue Thr-370 is a topological domain, lumenal, thylakoid.

The protein belongs to the GDT1 family. As to quaternary structure, homodimer.

It localises to the plastid. The protein resides in the chloroplast membrane. The protein localises to the thylakoid. In terms of biological role, mn(2+)/H(+) exchanger, which transport Mn(2+)from the chloroplast stroma into the acidic thylakoid lumen. Might be a chloroplast-localized Ca(2+)/H(+) antiporter. Regulates Ca(2+), Mn(2+) and pH homeostasis. Required for chloroplast development. This Arabidopsis thaliana (Mouse-ear cress) protein is Protein PAM71, chloroplastic.